Reading from the N-terminus, the 464-residue chain is Methionine aminopeptidase 2-2 (464 aa).

The disordered stretch occupies residues 1–106; the sequence is MGAKTYEGGD…PRVPLSQLFP (106 aa). Over residues 37–53 the composition is skewed to acidic residues; that stretch reads EDGDGEFGSDDDDDGGD. Positions 70–86 are enriched in basic residues; that stretch reads PKKKKRSKKKKNNKKKS. H216 is a substrate binding site. Positions 237, 248, and 317 each coordinate a divalent metal cation. Substrate is bound at residue H325. Residues E350 and E445 each coordinate a divalent metal cation.

This sequence belongs to the peptidase M24A family. Methionine aminopeptidase eukaryotic type 2 subfamily. Co(2+) serves as cofactor. It depends on Zn(2+) as a cofactor. The cofactor is Mn(2+). Requires Fe(2+) as cofactor.

It is found in the cytoplasm. The enzyme catalyses Release of N-terminal amino acids, preferentially methionine, from peptides and arylamides.. In terms of biological role, cotranslationally removes the N-terminal methionine from nascent proteins. The N-terminal methionine is often cleaved when the second residue in the primary sequence is small and uncharged (Met-Ala-, Cys, Gly, Pro, Ser, Thr, or Val). In Talaromyces stipitatus (strain ATCC 10500 / CBS 375.48 / QM 6759 / NRRL 1006) (Penicillium stipitatum), this protein is Methionine aminopeptidase 2-2.